The sequence spans 449 residues: UDP-N-acetylmuramoylalanine--D-glutamate ligase (449 aa).

118–124 contacts ATP; it reads GTNGKTT.

The protein belongs to the MurCDEF family.

The protein resides in the cytoplasm. It catalyses the reaction UDP-N-acetyl-alpha-D-muramoyl-L-alanine + D-glutamate + ATP = UDP-N-acetyl-alpha-D-muramoyl-L-alanyl-D-glutamate + ADP + phosphate + H(+). It participates in cell wall biogenesis; peptidoglycan biosynthesis. Its function is as follows. Cell wall formation. Catalyzes the addition of glutamate to the nucleotide precursor UDP-N-acetylmuramoyl-L-alanine (UMA). The chain is UDP-N-acetylmuramoylalanine--D-glutamate ligase from Staphylococcus saprophyticus subsp. saprophyticus (strain ATCC 15305 / DSM 20229 / NCIMB 8711 / NCTC 7292 / S-41).